A 2186-amino-acid chain; its full sequence is Non-reducing polyketide synthase men2 (2186 aa).

The Starter acyltransferase (SAT) domain maps to 16-255 (FFGDQTVDAL…MQLPLGTPAH (240 aa)). Residues 382–815 (SNLIAVVGQS…GGNNCVLLEE (434 aa)) enclose the Ketosynthase family 3 (KS3) domain. Catalysis depends on for beta-ketoacyl synthase activity residues Cys554, His690, and His729. A Malonyl-CoA:ACP transacylase (MAT) domain is found at 914–1204 (VFAFTGQGAQ…SSLVKSTLSA (291 aa)). The tract at residues 1299 to 1623 (TASLQQVRSE…TRRVLATVLG (325 aa)) is product template (PT) domain. Residues 1303 to 1434 (QQVRSEQING…CKLHFDKRGS (132 aa)) form an N-terminal hotdog fold region. In terms of domain architecture, PKS/mFAS DH spans 1303-1619 (QQVRSEQING…FQRLTRRVLA (317 aa)). The Proton acceptor; for dehydratase activity role is filled by His1335. The segment at 1463–1619 (TGHRLPKSVV…FQRLTRRVLA (157 aa)) is C-terminal hotdog fold. The active-site Proton donor; for dehydratase activity is the Asp1523. The region spanning 1666-1742 (VGDEKADAAI…GLRRAISELS (77 aa)) is the Carrier 1 domain. Ser1702 bears the O-(pantetheine 4'-phosphoryl)serine mark. The segment at 1747–1785 (GPASGSVSVSSSATTTHGMTTPSSTSSAQSSQSSQTPDG) is disordered. The span at 1749–1783 (ASGSVSVSSSATTTHGMTTPSSTSSAQSSQSSQTP) shows a compositional bias: low complexity. A Carrier 2 domain is found at 1784–1861 (DGPGIYANAV…HVRRALGSDS (78 aa)). Residue Ser1821 is modified to O-(pantetheine 4'-phosphoryl)serine. Positions 1857 to 1878 (LGSDSDGDSKPKSAPAPPAPEP) are disordered. A thioesterase (TE) domain region spans residues 1921–2163 (LFFLPDGTGY…TMPCDHLSLL (243 aa)).

The cofactor is pantetheine 4'-phosphate.

It participates in secondary metabolite biosynthesis. Its function is as follows. Non-reducing polyketide synthase; part of the gene cluster that mediates the biosynthesis of menisporopsin A, a bioactive macrocyclic polylactone. The biosynthesis of menisporopsin A is performed by a reducing (man1) and a non-reducing (men2) polyketide synthase that catalyze the formation of each menisporopsin A subunits, while the esterification and cyclolactonization activities are probably peformed by the unusual thioesterase domain of men2. First, a reduced diketide intermediate, 3-hydroxybutyryl-S-ACP is produced by men1 and transferred to men2; this is followed by a second reduced diketide which is further elongated using 3 units of malonyl-coA to form a reduced pentaketide. The cyclization of this intermediate by the PT domain forms the second subunit, 2,4-dihydroxy-6-(2-hydroxy-n-propyl)benzoyl-S-ACP. The TE domain of men2 then esterifies the secondary hydroxyl group on the side chain of the second subunit with the acyl-TE of the first subunit to form the first ester intermediate. This process occurs iteratively to form a linear tetraester intermediate. The final subunit is formed by a similar process, except that an extra malonyl-CoA is required in an additional elongation step to form a reduced hexaketide intermediate, and the carbonyl group next to the secondary hydroxyl group is reduced by a trans-acting ketoreductase. Again, the PT domain catalyzes cyclization to form the largest subunit, 2,4-dihydroxy-6-(2,4-dihydroxy-n-pentyl) benzoyl-S-ACP. Then the linear pentaester intermediate is formed. In this step, if the intermediate transfer rate is slow, intra- molecular cyclization involving the secondary hydroxyl group of the pentaester intermediate may occur to form menisporopsin B. Alternatively, transfer of the pentaester intermediate to the TE domain would allow cyclolactonization to be catalyzed by the TE to form menisporopsin A. This is Non-reducing polyketide synthase men2 from Menisporopsis theobromae.